We begin with the raw amino-acid sequence, 288 residues long: Bifunctional protein FolD (288 aa).

Residues glycine 166 to serine 168 and isoleucine 232 each bind NADP(+).

This sequence belongs to the tetrahydrofolate dehydrogenase/cyclohydrolase family. Homodimer.

The enzyme catalyses (6R)-5,10-methylene-5,6,7,8-tetrahydrofolate + NADP(+) = (6R)-5,10-methenyltetrahydrofolate + NADPH. It catalyses the reaction (6R)-5,10-methenyltetrahydrofolate + H2O = (6R)-10-formyltetrahydrofolate + H(+). The protein operates within one-carbon metabolism; tetrahydrofolate interconversion. Its function is as follows. Catalyzes the oxidation of 5,10-methylenetetrahydrofolate to 5,10-methenyltetrahydrofolate and then the hydrolysis of 5,10-methenyltetrahydrofolate to 10-formyltetrahydrofolate. In Acidithiobacillus ferrooxidans (strain ATCC 23270 / DSM 14882 / CIP 104768 / NCIMB 8455) (Ferrobacillus ferrooxidans (strain ATCC 23270)), this protein is Bifunctional protein FolD.